The sequence spans 335 residues: Peroxidase 53 (335 aa).

The signal sequence occupies residues 1–30 (MAVTNLPTCDGLFIISLIVIVSSIFGTSSA). At Gln-31 the chain carries Pyrrolidone carboxylic acid. N-linked (GlcNAc...) asparagine glycans are attached at residues Asn-33 and Asn-43. Disulfide bonds link Cys-41-Cys-121, Cys-74-Cys-79, Cys-127-Cys-329, and Cys-206-Cys-238. Catalysis depends on His-72, which acts as the Proton acceptor. Residues Asp-73, Val-76, Gly-78, Asp-80, and Ser-82 each contribute to the Ca(2+) site. Asn-165 carries an N-linked (GlcNAc...) asparagine glycan. Position 169 (Pro-169) interacts with substrate. An N-linked (GlcNAc...) asparagine glycan is attached at Asn-177. His-199 provides a ligand contact to heme b. Thr-200 is a Ca(2+) binding site. 3 N-linked (GlcNAc...) asparagine glycosylation sites follow: Asn-215, Asn-227, and Asn-241. Positions 251, 254, and 259 each coordinate Ca(2+). Asn-297 is a glycosylation site (N-linked (GlcNAc...) asparagine).

Belongs to the peroxidase family. Classical plant (class III) peroxidase subfamily. Ca(2+) serves as cofactor. It depends on heme b as a cofactor. Mainly expressed in roots.

It is found in the secreted. It carries out the reaction 2 a phenolic donor + H2O2 = 2 a phenolic radical donor + 2 H2O. Functionally, removal of H(2)O(2), oxidation of toxic reductants, biosynthesis and degradation of lignin, suberization, auxin catabolism, response to environmental stresses such as wounding, pathogen attack and oxidative stress. These functions might be dependent on each isozyme/isoform in each plant tissue. In terms of biological role, closely linked to lignin formation by showing monolignol substrate specificity. In Arabidopsis thaliana (Mouse-ear cress), this protein is Peroxidase 53 (PER53).